We begin with the raw amino-acid sequence, 646 residues long: Macrolide export ATP-binding/permease protein MacB (646 aa).

The 239-residue stretch at 7 to 245 (IRLEDICKTF…EATLQPHEEI (239 aa)) folds into the ABC transporter domain. 43–50 (GASGSGKS) contacts ATP. 4 helical membrane passes run 274–294 (VLTL…LAIG), 528–548 (VAAI…LVSV), 572–592 (FIIE…ILGL), and 609–629 (FGPV…FGFL).

Belongs to the ABC transporter superfamily. Macrolide exporter (TC 3.A.1.122) family. As to quaternary structure, homodimer.

Its subcellular location is the cell inner membrane. Functionally, non-canonical ABC transporter that contains transmembrane domains (TMD), which form a pore in the inner membrane, and an ATP-binding domain (NBD), which is responsible for energy generation. Confers resistance against macrolides. This Brucella abortus (strain 2308) protein is Macrolide export ATP-binding/permease protein MacB.